Here is a 142-residue protein sequence, read N- to C-terminus: MCHAAPARPEGARGRPPSGDNFSGAARSKPVGAAFEQRARQFLERHGLGFVAANVTMRGGELDLVMREPDGMLVFVEVRARRSTRHGGATASVGWRKRRRLVAAALQFWSRHGAGAACRFDVVAFEAGRLAWLRDAFRTDDA.

Over residues 1–19 the composition is skewed to low complexity; sequence MCHAAPARPEGARGRPPSG. The tract at residues 1 to 27 is disordered; that stretch reads MCHAAPARPEGARGRPPSGDNFSGAAR.

The protein belongs to the UPF0102 family.

The chain is UPF0102 protein Bcen2424_0290 from Burkholderia cenocepacia (strain HI2424).